Reading from the N-terminus, the 119-residue chain is uncharacterized protein (119 aa).

Residues 55 to 119 form a disordered region; that stretch reads LSTEPPTPPS…SRLPPRSWTN (65 aa). Residues 81–92 show a composition bias toward polar residues; it reads LSYTRCHSTTYT.

This is an uncharacterized protein from Saccharomyces cerevisiae (strain ATCC 204508 / S288c) (Baker's yeast).